The primary structure comprises 412 residues: Gamma-glutamyl phosphate reductase (412 aa).

It belongs to the gamma-glutamyl phosphate reductase family.

It is found in the cytoplasm. The catalysed reaction is L-glutamate 5-semialdehyde + phosphate + NADP(+) = L-glutamyl 5-phosphate + NADPH + H(+). Its pathway is amino-acid biosynthesis; L-proline biosynthesis; L-glutamate 5-semialdehyde from L-glutamate: step 2/2. Its function is as follows. Catalyzes the NADPH-dependent reduction of L-glutamate 5-phosphate into L-glutamate 5-semialdehyde and phosphate. The product spontaneously undergoes cyclization to form 1-pyrroline-5-carboxylate. The sequence is that of Gamma-glutamyl phosphate reductase from Actinobacillus pleuropneumoniae serotype 7 (strain AP76).